A 977-amino-acid polypeptide reads, in one-letter code: Phosphatidylinositol 4-kinase PIK1alpha (977 aa).

In terms of domain architecture, PIK helical spans 1–125; sequence MSADITETPN…QAVRNLITKI (125 aa). A disordered region spans residues 205 to 261; it reads MSADIPKGSHSDDETATSSSIKPSLSRSASVPRRNTKKTSLSFSSDESEAYTTDDDD. The span at 220–233 shows a compositional bias: polar residues; the sequence is ATSSSIKPSLSRSA. Residues 250–261 are compositionally biased toward acidic residues; it reads DESEAYTTDDDD. The PI3K/PI4K catalytic domain occupies 679–960; that stretch reads EDWNTKKQRI…FLIGKSLGSM (282 aa). The interval 685 to 691 is G-loop; it reads KQRIKKS. The tract at residues 826–834 is catalytic loop; that stretch reads QIKDRHNGN. The activation loop stretch occupies residues 845-869; sequence HIDFGFLLSNSPGSVGFEAAPFKLT.

This sequence belongs to the PI3/PI4-kinase family. Type III PI4K subfamily.

The protein localises to the nucleus. The catalysed reaction is a 1,2-diacyl-sn-glycero-3-phospho-(1D-myo-inositol) + ATP = a 1,2-diacyl-sn-glycero-3-phospho-(1D-myo-inositol 4-phosphate) + ADP + H(+). In terms of biological role, acts on phosphatidylinositol (PI) in the first committed step in the production of the second messenger inositol 1,4,5,-trisphosphate. The polypeptide is Phosphatidylinositol 4-kinase PIK1alpha (PIKALPHA) (Candida albicans (strain SC5314 / ATCC MYA-2876) (Yeast)).